Consider the following 112-residue polypeptide: Ig kappa chain V-II region MOPC 167 (112 aa).

The tract at residues 1 to 23 (DIVITQDELSNPVTSGESVSISC) is framework-1. An intrachain disulfide couples Cys23 to Cys93. A complementarity-determining-1 region spans residues 24–39 (RSSKSLLYKDGKTYLN). Positions 40–54 (WFLQRPGQSPQLLIS) are framework-2. The complementarity-determining-2 stretch occupies residues 55–61 (LMSTRAS). A framework-3 region spans residues 62–93 (GVSDRFSGSGSRTDFTLEISRVKAEDVGVYYC). A complementarity-determining-3 region spans residues 94–102 (QQLVEYPLT). The interval 103–112 (FGAGTKLELK) is framework-4.

This is Ig kappa chain V-II region MOPC 167 from Mus musculus (Mouse).